Reading from the N-terminus, the 346-residue chain is tRNA N6-adenosine threonylcarbamoyltransferase (346 aa).

Fe cation-binding residues include H111 and H115. Residues 134-138, D167, G180, and N279 contribute to the substrate site; that span reads LVSGG. D307 provides a ligand contact to Fe cation.

Belongs to the KAE1 / TsaD family. The cofactor is Fe(2+).

Its subcellular location is the cytoplasm. It catalyses the reaction L-threonylcarbamoyladenylate + adenosine(37) in tRNA = N(6)-L-threonylcarbamoyladenosine(37) in tRNA + AMP + H(+). In terms of biological role, required for the formation of a threonylcarbamoyl group on adenosine at position 37 (t(6)A37) in tRNAs that read codons beginning with adenine. Is involved in the transfer of the threonylcarbamoyl moiety of threonylcarbamoyl-AMP (TC-AMP) to the N6 group of A37, together with TsaE and TsaB. TsaD likely plays a direct catalytic role in this reaction. The polypeptide is tRNA N6-adenosine threonylcarbamoyltransferase (Burkholderia vietnamiensis (strain G4 / LMG 22486) (Burkholderia cepacia (strain R1808))).